The primary structure comprises 333 residues: Ornithine carbamoyltransferase (333 aa).

Carbamoyl phosphate-binding positions include 56-59 (STRT), Gln-83, Arg-107, and 134-137 (HPTQ). Residues Asn-167, Asp-231, and 235–236 (SM) each bind L-ornithine. Carbamoyl phosphate is bound by residues 273-274 (CL) and Arg-318.

This sequence belongs to the aspartate/ornithine carbamoyltransferase superfamily. OTCase family.

The protein localises to the cytoplasm. The catalysed reaction is carbamoyl phosphate + L-ornithine = L-citrulline + phosphate + H(+). It functions in the pathway amino-acid biosynthesis; L-arginine biosynthesis; L-arginine from L-ornithine and carbamoyl phosphate: step 1/3. Functionally, reversibly catalyzes the transfer of the carbamoyl group from carbamoyl phosphate (CP) to the N(epsilon) atom of ornithine (ORN) to produce L-citrulline. The protein is Ornithine carbamoyltransferase (argF) of Staphylococcus aureus (strain COL).